Here is a 126-residue protein sequence, read N- to C-terminus: Large ribosomal subunit protein bL12 (126 aa).

The protein belongs to the bacterial ribosomal protein bL12 family. In terms of assembly, homodimer. Part of the ribosomal stalk of the 50S ribosomal subunit. Forms a multimeric L10(L12)X complex, where L10 forms an elongated spine to which 2 to 4 L12 dimers bind in a sequential fashion. Binds GTP-bound translation factors.

Forms part of the ribosomal stalk which helps the ribosome interact with GTP-bound translation factors. Is thus essential for accurate translation. This is Large ribosomal subunit protein bL12 from Citrifermentans bemidjiense (strain ATCC BAA-1014 / DSM 16622 / JCM 12645 / Bem) (Geobacter bemidjiensis).